The primary structure comprises 96 residues: Small ribosomal subunit protein bS6 (96 aa).

The protein belongs to the bacterial ribosomal protein bS6 family.

Its function is as follows. Binds together with bS18 to 16S ribosomal RNA. The polypeptide is Small ribosomal subunit protein bS6 (Heliobacterium modesticaldum (strain ATCC 51547 / Ice1)).